We begin with the raw amino-acid sequence, 2152 residues long: Oxygen-regulated protein 1 (2152 aa).

The span at methionine 1–aspartate 19 shows a compositional bias: polar residues. Residues methionine 1 to arginine 25 are disordered. 2 Doublecortin domains span residues lysine 36–aspartate 118 and arginine 154–aspartate 233. Disordered regions lie at residues valine 353 to serine 375, aspartate 1435 to serine 1455, and aspartate 1587 to glutamine 1616.

As to quaternary structure, interacts (via the doublecortin domains) with microtubules. Interacts with RP1L1. Interacts with MAK.

Its subcellular location is the cytoplasm. It is found in the cytoskeleton. The protein resides in the cilium axoneme. It localises to the cell projection. The protein localises to the cilium. Its subcellular location is the photoreceptor outer segment. Functionally, microtubule-associated protein regulating the stability and length of the microtubule-based axoneme of photoreceptors. Required for the differentiation of photoreceptor cells, it plays a role in the organization of the outer segment of rod and cone photoreceptors ensuring the correct orientation and higher-order stacking of outer segment disks along the photoreceptor axoneme. This is Oxygen-regulated protein 1 (RP1) from Papio hamadryas (Hamadryas baboon).